A 321-amino-acid chain; its full sequence is Probable arabinan endo-1,5-alpha-L-arabinosidase A (321 aa).

An N-terminal signal peptide occupies residues 1–19 (MSASVFVVVASCLAALAHG). The Proton acceptor role is filled by Asp-34. Residue Glu-200 is the Proton donor of the active site.

Belongs to the glycosyl hydrolase 43 family.

The protein resides in the secreted. It catalyses the reaction Endohydrolysis of (1-&gt;5)-alpha-arabinofuranosidic linkages in (1-&gt;5)-arabinans.. Its pathway is glycan metabolism; L-arabinan degradation. Its function is as follows. Endo-1,5-alpha-L-arabinanase involved in degradation of pectin. Its preferred substrate is linear 1,5-alpha-L-arabinan. This is Probable arabinan endo-1,5-alpha-L-arabinosidase A (abnA) from Aspergillus fumigatus (strain ATCC MYA-4609 / CBS 101355 / FGSC A1100 / Af293) (Neosartorya fumigata).